The sequence spans 493 residues: Glutamate synthase [NADPH] small chain (493 aa).

Residue G299–R313 coordinates NADP(+).

It belongs to the glutamate synthase family. As to quaternary structure, aggregate of 4 catalytic active heterodimers, consisting of a large and a small subunit.

The enzyme catalyses 2 L-glutamate + NADP(+) = L-glutamine + 2-oxoglutarate + NADPH + H(+). The protein operates within amino-acid biosynthesis; L-glutamate biosynthesis via GLT pathway; L-glutamate from 2-oxoglutarate and L-glutamine (NADP(+) route): step 1/1. It participates in energy metabolism; nitrogen metabolism. The chain is Glutamate synthase [NADPH] small chain (gltB) from Bacillus subtilis (strain 168).